A 227-amino-acid polypeptide reads, in one-letter code: Myogenin (227 aa).

One can recognise a bHLH domain in the interval 82–133 (DRRRAATLREKRRLKKVNEAFEALKRSTLLNPNQRLPKVEILRSAIQYIERL). The segment at 147–196 (QRELRYRPAAPQPAAPSECGSGSSSCSPEWSTQLEFGTNPADHLLSDDQA) is disordered. Low complexity predominate over residues 161 to 175 (APSECGSGSSSCSPE).

Homodimer and heterodimer. Efficient DNA binding requires dimerization with another bHLH protein.

Its subcellular location is the nucleus. In terms of biological role, acts as a transcriptional activator that promotes transcription of muscle-specific target genes and plays a role in muscle differentiation. Induces fibroblasts to differentiate into myoblasts. Probable sequence specific DNA-binding protein. In Gallus gallus (Chicken), this protein is Myogenin (MYOG).